The chain runs to 513 residues: Sterol 14-alpha demethylase rstn2 (513 aa).

A helical transmembrane segment spans residues 3-23 (WPLIGAYALLAFVAIIALNVT). Cysteine 453 is a heme binding site.

It belongs to the cytochrome P450 family. Heme is required as a cofactor.

It localises to the membrane. The enzyme catalyses a 14alpha-methyl steroid + 3 reduced [NADPH--hemoprotein reductase] + 3 O2 = a Delta(14) steroid + formate + 3 oxidized [NADPH--hemoprotein reductase] + 4 H2O + 4 H(+). It catalyses the reaction a 14alpha-methyl steroid + reduced [NADPH--hemoprotein reductase] + O2 = a 14alpha-hydroxymethyl steroid + oxidized [NADPH--hemoprotein reductase] + H2O + H(+). The catalysed reaction is a 14alpha-hydroxymethyl steroid + reduced [NADPH--hemoprotein reductase] + O2 = a 14alpha-formyl steroid + oxidized [NADPH--hemoprotein reductase] + 2 H2O + H(+). It carries out the reaction a 14alpha-formyl steroid + reduced [NADPH--hemoprotein reductase] + O2 = a Delta(14) steroid + formate + oxidized [NADPH--hemoprotein reductase] + H2O + 2 H(+). The enzyme catalyses lanosterol + 3 reduced [NADPH--hemoprotein reductase] + 3 O2 = 4,4-dimethyl-5alpha-cholesta-8,14,24-trien-3beta-ol + formate + 3 oxidized [NADPH--hemoprotein reductase] + 4 H2O + 4 H(+). It catalyses the reaction lanosterol + reduced [NADPH--hemoprotein reductase] + O2 = 32-hydroxylanosterol + oxidized [NADPH--hemoprotein reductase] + H2O + H(+). The catalysed reaction is 32-hydroxylanosterol + reduced [NADPH--hemoprotein reductase] + O2 = 32-oxolanosterol + oxidized [NADPH--hemoprotein reductase] + 2 H2O + H(+). It carries out the reaction 32-oxolanosterol + reduced [NADPH--hemoprotein reductase] + O2 = 4,4-dimethyl-5alpha-cholesta-8,14,24-trien-3beta-ol + formate + oxidized [NADPH--hemoprotein reductase] + H2O + 2 H(+). The enzyme catalyses eburicol + 3 reduced [NADPH--hemoprotein reductase] + 3 O2 = 14-demethyleburicol + formate + 3 oxidized [NADPH--hemoprotein reductase] + 4 H2O + 4 H(+). It catalyses the reaction eburicol + reduced [NADPH--hemoprotein reductase] + O2 = 32-hydroxyeburicol + oxidized [NADPH--hemoprotein reductase] + H2O + H(+). The catalysed reaction is 32-hydroxyeburicol + reduced [NADPH--hemoprotein reductase] + O2 = 32-oxoeburicol + oxidized [NADPH--hemoprotein reductase] + 2 H2O + H(+). It carries out the reaction 32-oxoeburicol + reduced [NADPH--hemoprotein reductase] + O2 = 14-demethyleburicol + formate + oxidized [NADPH--hemoprotein reductase] + H2O + 2 H(+). It participates in steroid biosynthesis; sterol biosynthesis. Sterol 14-alpha demethylase; part of the gene cluster that mediates the biosynthesis of the tetrahydropyranyl antifungal agent restricticin that acts as an inhibitor of CYP51 and blocks the ergosterol biosynthesis. Sterol 14-alpha-demethylase plays a critical role in the biosynthesis of ergosterol, the major sterol component in fungal membranes that participates in a variety of functions. Rtsn2 acts as a self-resistant CYP51 that contains mutations found in CYP51s isolated from azole resistance strains and that is not inhibited by the final product of the cluster, restricticin. In Aspergillus nomiae NRRL (strain ATCC 15546 / NRRL 13137 / CBS 260.88 / M93), this protein is Sterol 14-alpha demethylase rstn2.